Here is a 245-residue protein sequence, read N- to C-terminus: Nodulation protein G (245 aa).

Position 11–35 (11–35 (VTGASGGIGEAIARVLHAQGAIVGL)) interacts with NAD(+). S139 is a binding site for substrate. The active-site Proton acceptor is Y152.

The protein belongs to the short-chain dehydrogenases/reductases (SDR) family.

In terms of biological role, proposed to modify Nod factor fatty acyl chain. The polypeptide is Nodulation protein G (nodG) (Rhizobium sp. (strain N33)).